We begin with the raw amino-acid sequence, 325 residues long: UPF0285 protein MmarC7_1666 (325 aa).

It belongs to the UPF0285 family.

The chain is UPF0285 protein MmarC7_1666 from Methanococcus maripaludis (strain C7 / ATCC BAA-1331).